The primary structure comprises 153 residues: 3-hydroxyacyl-[acyl-carrier-protein] dehydratase FabZ (153 aa).

Histidine 54 is a catalytic residue.

This sequence belongs to the thioester dehydratase family. FabZ subfamily.

It is found in the cytoplasm. It catalyses the reaction a (3R)-hydroxyacyl-[ACP] = a (2E)-enoyl-[ACP] + H2O. Involved in unsaturated fatty acids biosynthesis. Catalyzes the dehydration of short chain beta-hydroxyacyl-ACPs and long chain saturated and unsaturated beta-hydroxyacyl-ACPs. This is 3-hydroxyacyl-[acyl-carrier-protein] dehydratase FabZ from Shewanella frigidimarina (strain NCIMB 400).